A 386-amino-acid chain; its full sequence is Pepsin A (386 aa).

Residues 1–15 (MKWLLLLSLVALSEC) form the signal peptide. The propeptide at 16–60 (YIYKVPLVKKKSLRKNLMEQGLLQDYLKTHSINPASKYLKEAASM) is activation peptide. The Peptidase A1 domain maps to 74-383 (YFGTIGIGTP…DRGNNQVGLA (310 aa)). D92 is a catalytic residue. 2 disulfide bridges follow: C105–C110 and C266–C270. The active site involves D275. A disulfide bridge connects residues C309 and C342.

It belongs to the peptidase A1 family.

Its subcellular location is the secreted. The catalysed reaction is Preferential cleavage: hydrophobic, preferably aromatic, residues in P1 and P1' positions. Cleaves 1-Phe-|-Val-2, 4-Gln-|-His-5, 13-Glu-|-Ala-14, 14-Ala-|-Leu-15, 15-Leu-|-Tyr-16, 16-Tyr-|-Leu-17, 23-Gly-|-Phe-24, 24-Phe-|-Phe-25 and 25-Phe-|-Tyr-26 bonds in the B chain of insulin.. Functionally, shows particularly broad specificity; although bonds involving phenylalanine and leucine are preferred, many others are also cleaved to some extent. This Rhinolophus ferrumequinum (Greater horseshoe bat) protein is Pepsin A (PGA).